The chain runs to 114 residues: 11.9 kDa wall protein (114 aa).

A propeptide spanning residues Met-1–Arg-6 is cleaved from the precursor.

The protein resides in the secreted. Its subcellular location is the cell wall. Functionally, may play a role in the structure of the hypha-forming fruit bodies. This Tuber dryophilum (Truffle) protein is 11.9 kDa wall protein (TDF-1).